Here is a 61-residue protein sequence, read N- to C-terminus: Small ribosomal subunit protein uS14B (61 aa).

Zn(2+) is bound by residues Cys24, Cys27, Cys40, and Cys43.

It belongs to the universal ribosomal protein uS14 family. Zinc-binding uS14 subfamily. As to quaternary structure, part of the 30S ribosomal subunit. Contacts proteins S3 and S10. Zn(2+) serves as cofactor.

Binds 16S rRNA, required for the assembly of 30S particles and may also be responsible for determining the conformation of the 16S rRNA at the A site. The protein is Small ribosomal subunit protein uS14B of Cutibacterium acnes (strain DSM 16379 / KPA171202) (Propionibacterium acnes).